The sequence spans 248 residues: Pyridoxine 5'-phosphate synthase (248 aa).

N10 is a 3-amino-2-oxopropyl phosphate binding site. A 1-deoxy-D-xylulose 5-phosphate-binding site is contributed by 12–13 (DH). A 3-amino-2-oxopropyl phosphate-binding site is contributed by R21. H46 functions as the Proton acceptor in the catalytic mechanism. Positions 48 and 53 each coordinate 1-deoxy-D-xylulose 5-phosphate. The active-site Proton acceptor is the E73. Residue T103 coordinates 1-deoxy-D-xylulose 5-phosphate. The active-site Proton donor is H194. Residues G195 and 216–217 (GH) each bind 3-amino-2-oxopropyl phosphate.

Belongs to the PNP synthase family. As to quaternary structure, homooctamer; tetramer of dimers.

It is found in the cytoplasm. The enzyme catalyses 3-amino-2-oxopropyl phosphate + 1-deoxy-D-xylulose 5-phosphate = pyridoxine 5'-phosphate + phosphate + 2 H2O + H(+). The protein operates within cofactor biosynthesis; pyridoxine 5'-phosphate biosynthesis; pyridoxine 5'-phosphate from D-erythrose 4-phosphate: step 5/5. Catalyzes the complicated ring closure reaction between the two acyclic compounds 1-deoxy-D-xylulose-5-phosphate (DXP) and 3-amino-2-oxopropyl phosphate (1-amino-acetone-3-phosphate or AAP) to form pyridoxine 5'-phosphate (PNP) and inorganic phosphate. This chain is Pyridoxine 5'-phosphate synthase, found in Legionella pneumophila (strain Corby).